We begin with the raw amino-acid sequence, 203 residues long: Synaptosomal-associated protein 25-B (203 aa).

Positions 1-11 (MADEADMRNEL) are enriched in basic and acidic residues. The interval 1–25 (MADEADMRNELTDMQARADQLGDES) is disordered. 2 consecutive t-SNARE coiled-coil homology domains span residues 19-81 (DQLG…LTDL) and 137-199 (DARE…ATKM).

This sequence belongs to the SNAP-25 family.

It localises to the synapse. The protein resides in the synaptosome. The protein localises to the cell membrane. Its function is as follows. May play an important role in the synaptic function of specific neuronal systems. Associates with proteins involved in vesicle docking and membrane fusion. The chain is Synaptosomal-associated protein 25-B (snap25b) from Carassius auratus (Goldfish).